The following is a 329-amino-acid chain: 4-hydroxythreonine-4-phosphate dehydrogenase (329 aa).

The substrate site is built by His136 and Thr137. Residues His166, His211, and His266 each coordinate a divalent metal cation. Residues Lys274, Asn283, and Arg292 each contribute to the substrate site.

The protein belongs to the PdxA family. As to quaternary structure, homodimer. Zn(2+) serves as cofactor. The cofactor is Mg(2+). Requires Co(2+) as cofactor.

The protein localises to the cytoplasm. The enzyme catalyses 4-(phosphooxy)-L-threonine + NAD(+) = 3-amino-2-oxopropyl phosphate + CO2 + NADH. The protein operates within cofactor biosynthesis; pyridoxine 5'-phosphate biosynthesis; pyridoxine 5'-phosphate from D-erythrose 4-phosphate: step 4/5. In terms of biological role, catalyzes the NAD(P)-dependent oxidation of 4-(phosphooxy)-L-threonine (HTP) into 2-amino-3-oxo-4-(phosphooxy)butyric acid which spontaneously decarboxylates to form 3-amino-2-oxopropyl phosphate (AHAP). The sequence is that of 4-hydroxythreonine-4-phosphate dehydrogenase from Salmonella typhimurium (strain LT2 / SGSC1412 / ATCC 700720).